A 660-amino-acid chain; its full sequence is Methionine--tRNA ligase 1 (660 aa).

The short motif at 15 to 25 (YYPSGKLHIGH) is the 'HIGH' region element. The short motif at 310–314 (KMSKS) is the 'KMSKS' region element. Lys313 provides a ligand contact to ATP. The 101-residue stretch at 560-660 (DFFKVELRVA…QNLPNGTKIK (101 aa)) folds into the tRNA-binding domain.

Belongs to the class-I aminoacyl-tRNA synthetase family. MetG type 2B subfamily. Homodimer.

It localises to the cytoplasm. The catalysed reaction is tRNA(Met) + L-methionine + ATP = L-methionyl-tRNA(Met) + AMP + diphosphate. In terms of biological role, is required not only for elongation of protein synthesis but also for the initiation of all mRNA translation through initiator tRNA(fMet) aminoacylation. This Bacillus cereus (strain ATCC 14579 / DSM 31 / CCUG 7414 / JCM 2152 / NBRC 15305 / NCIMB 9373 / NCTC 2599 / NRRL B-3711) protein is Methionine--tRNA ligase 1.